The primary structure comprises 495 residues: Potassium voltage-gated channel subfamily A member 1 (495 aa).

The segment at 1–30 is disordered; that stretch reads MTVMSGENADEASTAPGHPQDGSYPRQADH. The tetramerization domain stretch occupies residues 1–128; that stretch reads MTVMSGENAD…FYELGEEAME (128 aa). Residues 1 to 164 are Cytoplasmic-facing; it reads MTVMSGENAD…LLFEYPESSG (164 aa). S23 carries the phosphoserine modification. The chain crosses the membrane as a helical span at residues 165-186; the sequence is PARVIAIVSVMVILISIVIFCL. The Extracellular segment spans residues 187-220; it reads ETLPELKDDKDFTGTIHRIDNTTVIYTSNIFTDP. N207 carries N-linked (GlcNAc...) asparagine glycosylation. The chain crosses the membrane as a helical span at residues 221-242; the sequence is FFIVETLCIIWFSFELVVRFFA. C243 carries S-palmitoyl cysteine lipidation. At 243–253 the chain is on the cytoplasmic side; it reads CPSKTDFFKNI. The helical transmembrane segment at 254-274 threads the bilayer; that stretch reads MNFIDIVAIIPYFITLGTEIA. Over 275 to 287 the chain is Extracellular; that stretch reads EQEGNQKGEQATS. The chain crosses the membrane as a helical; Voltage-sensor span at residues 288–308; that stretch reads LAILRVIRLVRVFRIFKLSRH. Residues 309-323 are Cytoplasmic-facing; it reads SKGLQILGQTLKASM. Positions 310–323 are S4-S5 linker; sequence KGLQILGQTLKASM. S322 is modified (phosphoserine; by PKA). Residues 324–345 traverse the membrane as a helical segment; that stretch reads RELGLLIFFLFIGVILFSSAVY. The Extracellular portion of the chain corresponds to 346-359; the sequence is FAEAEEAESHFSSI. The helical intramembrane region spans 360–371; that stretch reads PDAFWWAVVSMT. Positions 372–377 match the Selectivity filter motif; the sequence is TVGYGD. Residues 372-379 lie within the membrane without spanning it; it reads TVGYGDMY. Topologically, residues 380-386 are extracellular; the sequence is PVTIGGK. A helical membrane pass occupies residues 387 to 415; the sequence is IVGSLCAIAGVLTIALPVPVIVSNFNYFY. At 416 to 495 the chain is on the cytoplasmic side; sequence HRETEGEEQA…VNKSKLLTDV (80 aa). Residues S437 and S439 each carry the phosphoserine modification. Phosphoserine; by PKA is present on S446. A PDZ-binding motif is present at residues 493 to 495; the sequence is TDV.

Belongs to the potassium channel family. A (Shaker) (TC 1.A.1.2) subfamily. Kv1.1/KCNA1 sub-subfamily. As to quaternary structure, homotetramer and heterotetramer with other channel-forming alpha subunits, such as KCNA2, KCNA4, KCNA5, KCNA6 and KCNA7. Channel activity is regulated by interaction with the beta subunits KCNAB1 and KCNAB2. Identified in a complex with KCNA2 and KCNAB2. Interacts (via C-terminus) with the PDZ domains of DLG1, DLG2 and DLG4. Interacts with LGI1 within a complex containing LGI1, KCNA4 and KCNAB1. Interacts (via N-terminus) with STX1A; this promotes channel inactivation. Interacts (via N-terminus) with the heterodimer formed by GNB1 and GNG2; this promotes channel inactivation. Can interact simultaneously with STX1A and the heterodimer formed by GNB1 and GNG2. Interacts (via cytoplasmic N-terminal domain) with KCNRG; this inhibits channel activity. Interacts with ANK3; this inhibits channel activity. Interacts with ADAM11. N-glycosylated. In terms of processing, palmitoylated on Cys-243; which may be required for membrane targeting. Post-translationally, phosphorylated on tyrosine residues. Phosphorylation increases in response to NRG1; this inhibits channel activity. Phosphorylation at Ser-446 regulates channel activity by down-regulating expression at the cell membrane. Detected in brain. Expressed in cerebellar cortex basket cell terminals, the area surround the Purkinje cell soma, and the pinceaux expansions encircling the axon initial segment (at protein level). Detected in the juxtaparanodal regions of the nodes of Ranvier in myelinated axons. Detected in the paranodal region in sciatic nerve. Detected on cell bodies in cerebellum, dorsal and ventral cochlear nucleus, pontine reticular nucleus, mesencephalic trigeminal nucleus, motor trigeminal nucleus and the pricipal sensory trigeminal nucleus. Detected in terminal fields of basket cells in the cerebellum corpus medullare. Detected in hippocampus CA3 pyramidal neurons and in the hilus and stratum moleculare of the dentate gyrus. Detected in the central nucleus and the external nucleus of the inferior colliculus. Detected in fiber tracts in the optic tract, external medullary lamina, stria terminalis, medulla, ventral pallidum and substantia nigra. Detected in neurons from dorsal root ganglion. Detected in neurons in the medial nucleus of the trapezoid body. Detected in midbrain dopamine neuron axon terminals. Detected in brain cortex. Detected in brainstem. Detected in juxtaparanodal regions of the nodes of Ranvier in the vagus nerve, but only at very low levels in the heart. Detected in the islet of Langerhans. Detected at the luminal membrane in distal convoluted tubules in the kidney (at protein level). Detected in hippocampus, thalamus, neocortex and ventral brain cortex, including the piriform and entorhinal cortex and the amygdala. Detected in midbrain dopamine neurons. Detected in heart atrium, ventricle, sinoatrial node and atrioventricular node.

The protein resides in the cell membrane. The protein localises to the cell projection. It localises to the axon. It is found in the membrane. Its subcellular location is the perikaryon. The protein resides in the dendrite. The protein localises to the cell junction. It localises to the synapse. It is found in the cytoplasmic vesicle. Its subcellular location is the endoplasmic reticulum. The protein resides in the presynaptic cell membrane. The protein localises to the presynapse. The enzyme catalyses K(+)(in) = K(+)(out). With respect to regulation, inhibited by 4-aminopyridine (4-AP), tetraethylammonium (TEA) and dendrotoxin (DTX), but not by charybdotoxin (CTX). In terms of biological role, voltage-gated potassium channel that mediates transmembrane potassium transport in excitable membranes, primarily in the brain and the central nervous system, but also in the kidney. Contributes to the regulation of the membrane potential and nerve signaling, and prevents neuronal hyperexcitability. Forms tetrameric potassium-selective channels through which potassium ions pass in accordance with their electrochemical gradient. The channel alternates between opened and closed conformations in response to the voltage difference across the membrane. Can form functional homotetrameric channels and heterotetrameric channels that contain variable proportions of KCNA1, KCNA2, KCNA4, KCNA5, KCNA6, KCNA7, and possibly other family members as well; channel properties depend on the type of alpha subunits that are part of the channel. Channel properties are modulated by cytoplasmic beta subunits that regulate the subcellular location of the alpha subunits and promote rapid inactivation of delayed rectifier potassium channels. In vivo, membranes probably contain a mixture of heteromeric potassium channel complexes, making it difficult to assign currents observed in intact tissues to any particular potassium channel family member. Homotetrameric KCNA1 forms a delayed-rectifier potassium channel that opens in response to membrane depolarization, followed by slow spontaneous channel closure. In contrast, a heterotetrameric channel formed by KCNA1 and KCNA4 shows rapid inactivation. Regulates neuronal excitability in hippocampus, especially in mossy fibers and medial perforant path axons, preventing neuronal hyperexcitability. May function as down-stream effector for G protein-coupled receptors and inhibit GABAergic inputs to basolateral amygdala neurons. May contribute to the regulation of neurotransmitter release, such as gamma-aminobutyric acid (GABA) release. Plays a role in regulating the generation of action potentials and preventing hyperexcitability in myelinated axons of the vagus nerve, and thereby contributes to the regulation of heart contraction. Required for normal neuromuscular responses. Regulates the frequency of neuronal action potential firing in response to mechanical stimuli, and plays a role in the perception of pain caused by mechanical stimuli, but does not play a role in the perception of pain due to heat stimuli. Required for normal responses to auditory stimuli and precise location of sound sources, but not for sound perception. The use of toxins that block specific channels suggest that it contributes to the regulation of the axonal release of the neurotransmitter dopamine. Required for normal postnatal brain development and normal proliferation of neuronal precursor cells in the brain. Plays a role in the reabsorption of Mg(2+) in the distal convoluted tubules in the kidney and in magnesium ion homeostasis, probably via its effect on the membrane potential. This is Potassium voltage-gated channel subfamily A member 1 from Mus musculus (Mouse).